The primary structure comprises 334 residues: Magnesium-chelatase 38 kDa subunit (334 aa).

36–43 (GDRGTGKS) is an ATP binding site.

Belongs to the Mg-chelatase subunits D/I family.

The enzyme catalyses protoporphyrin IX + Mg(2+) + ATP + H2O = Mg-protoporphyrin IX + ADP + phosphate + 3 H(+). It participates in porphyrin-containing compound metabolism; bacteriochlorophyll biosynthesis. Its function is as follows. Involved in bacteriochlorophyll biosynthesis; introduces a magnesium ion into protoporphyrin IX to yield Mg-protoporphyrin IX. In Cereibacter sphaeroides (strain ATCC 17023 / DSM 158 / JCM 6121 / CCUG 31486 / LMG 2827 / NBRC 12203 / NCIMB 8253 / ATH 2.4.1.) (Rhodobacter sphaeroides), this protein is Magnesium-chelatase 38 kDa subunit (bchI).